Reading from the N-terminus, the 186-residue chain is ATP synthase subunit delta (186 aa).

The protein belongs to the ATPase delta chain family. As to quaternary structure, F-type ATPases have 2 components, F(1) - the catalytic core - and F(0) - the membrane proton channel. F(1) has five subunits: alpha(3), beta(3), gamma(1), delta(1), epsilon(1). CF(0) has four main subunits: a(1), b(1), b'(1) and c(10-14). The alpha and beta chains form an alternating ring which encloses part of the gamma chain. F(1) is attached to F(0) by a central stalk formed by the gamma and epsilon chains, while a peripheral stalk is formed by the delta, b and b' chains.

The protein resides in the cell inner membrane. F(1)F(0) ATP synthase produces ATP from ADP in the presence of a proton or sodium gradient. F-type ATPases consist of two structural domains, F(1) containing the extramembraneous catalytic core and F(0) containing the membrane proton channel, linked together by a central stalk and a peripheral stalk. During catalysis, ATP synthesis in the catalytic domain of F(1) is coupled via a rotary mechanism of the central stalk subunits to proton translocation. Its function is as follows. This protein is part of the stalk that links CF(0) to CF(1). It either transmits conformational changes from CF(0) to CF(1) or is implicated in proton conduction. The protein is ATP synthase subunit delta of Rhodospirillum rubrum (strain ATCC 11170 / ATH 1.1.1 / DSM 467 / LMG 4362 / NCIMB 8255 / S1).